We begin with the raw amino-acid sequence, 352 residues long: Ribosomal RNA large subunit methyltransferase M (352 aa).

S-adenosyl-L-methionine is bound by residues Ser184, 217 to 220, Asp236, Asp256, and Asp272; that span reads APGG. Lys301 functions as the Proton acceptor in the catalytic mechanism.

It belongs to the class I-like SAM-binding methyltransferase superfamily. RNA methyltransferase RlmE family. RlmM subfamily. In terms of assembly, monomer.

Its subcellular location is the cytoplasm. The catalysed reaction is cytidine(2498) in 23S rRNA + S-adenosyl-L-methionine = 2'-O-methylcytidine(2498) in 23S rRNA + S-adenosyl-L-homocysteine + H(+). In terms of biological role, catalyzes the 2'-O-methylation at nucleotide C2498 in 23S rRNA. This chain is Ribosomal RNA large subunit methyltransferase M, found in Pseudomonas paraeruginosa (strain DSM 24068 / PA7) (Pseudomonas aeruginosa (strain PA7)).